A 341-amino-acid polypeptide reads, in one-letter code: S-adenosylmethionine:tRNA ribosyltransferase-isomerase (341 aa).

It belongs to the QueA family. As to quaternary structure, monomer.

The protein resides in the cytoplasm. The enzyme catalyses 7-aminomethyl-7-carbaguanosine(34) in tRNA + S-adenosyl-L-methionine = epoxyqueuosine(34) in tRNA + adenine + L-methionine + 2 H(+). It functions in the pathway tRNA modification; tRNA-queuosine biosynthesis. In terms of biological role, transfers and isomerizes the ribose moiety from AdoMet to the 7-aminomethyl group of 7-deazaguanine (preQ1-tRNA) to give epoxyqueuosine (oQ-tRNA). The chain is S-adenosylmethionine:tRNA ribosyltransferase-isomerase from Chlorobium phaeobacteroides (strain DSM 266 / SMG 266 / 2430).